Here is a 98-residue protein sequence, read N- to C-terminus: NADH-ubiquinone oxidoreductase chain 4L (98 aa).

The next 3 helical transmembrane spans lie at Pro-2 to Phe-22, Ser-29 to Leu-49, and Ile-61 to Val-81.

Belongs to the complex I subunit 4L family. Core subunit of respiratory chain NADH dehydrogenase (Complex I) which is composed of 45 different subunits.

It localises to the mitochondrion inner membrane. It carries out the reaction a ubiquinone + NADH + 5 H(+)(in) = a ubiquinol + NAD(+) + 4 H(+)(out). Functionally, core subunit of the mitochondrial membrane respiratory chain NADH dehydrogenase (Complex I) which catalyzes electron transfer from NADH through the respiratory chain, using ubiquinone as an electron acceptor. Part of the enzyme membrane arm which is embedded in the lipid bilayer and involved in proton translocation. The sequence is that of NADH-ubiquinone oxidoreductase chain 4L (MT-ND4L) from Eulemur mongoz (Mongoose lemur).